The primary structure comprises 455 residues: Probable glycine dehydrogenase (decarboxylating) subunit 1 (455 aa).

The protein belongs to the GcvP family. N-terminal subunit subfamily. In terms of assembly, the glycine cleavage system is composed of four proteins: P, T, L and H. In this organism, the P 'protein' is a heterodimer of two subunits.

The catalysed reaction is N(6)-[(R)-lipoyl]-L-lysyl-[glycine-cleavage complex H protein] + glycine + H(+) = N(6)-[(R)-S(8)-aminomethyldihydrolipoyl]-L-lysyl-[glycine-cleavage complex H protein] + CO2. Its function is as follows. The glycine cleavage system catalyzes the degradation of glycine. The P protein binds the alpha-amino group of glycine through its pyridoxal phosphate cofactor; CO(2) is released and the remaining methylamine moiety is then transferred to the lipoamide cofactor of the H protein. This chain is Probable glycine dehydrogenase (decarboxylating) subunit 1, found in Saccharolobus islandicus (strain M.16.27) (Sulfolobus islandicus).